The primary structure comprises 596 residues: Probable ABC transporter ECU01_0200/ECU01_1410 (596 aa).

Transmembrane regions (helical) follow at residues 26–46 (ALMA…VMSI), 173–193 (LVPI…MLRI), and 289–309 (LSVL…LGGI). The ABC transmembrane type-1 domain maps to 39–318 (KWFDVMSIKR…IARDLGFWLT (280 aa)). The 233-residue stretch at 361–593 (VEFDDVSFAY…RGMYWRMKTA (233 aa)) folds into the ABC transporter domain. Residues Tyr-370 and 400–411 (GRPGSGKSTILR) contribute to the ATP site.

The protein belongs to the ABC transporter superfamily. ABCB family. Heavy Metal importer (TC 3.A.1.210) subfamily.

It localises to the membrane. This is Probable ABC transporter ECU01_0200/ECU01_1410 from Encephalitozoon cuniculi (strain GB-M1) (Microsporidian parasite).